Consider the following 573-residue polypeptide: Urease subunit alpha (573 aa).

The Ni(2+) site is built by histidine 139, histidine 141, and lysine 222. Residue lysine 222 is modified to N6-carboxylysine. Residue histidine 224 coordinates substrate. Residues histidine 251 and histidine 277 each contribute to the Ni(2+) site. Residue histidine 325 is the Proton donor of the active site. Aspartate 365 lines the Ni(2+) pocket.

This sequence belongs to the metallo-dependent hydrolases superfamily. Urease alpha subunit family. Heterotrimer of UreA (gamma), UreB (beta) and UreC (alpha) subunits. Three heterotrimers associate to form the active enzyme. Requires Ni cation as cofactor. In terms of processing, carboxylation allows a single lysine to coordinate two nickel ions.

Its subcellular location is the cytoplasm. The enzyme catalyses urea + 2 H2O + H(+) = hydrogencarbonate + 2 NH4(+). It functions in the pathway nitrogen metabolism; urea degradation; CO(2) and NH(3) from urea (urease route): step 1/1. The protein is Urease subunit alpha of Flavobacterium johnsoniae (strain ATCC 17061 / DSM 2064 / JCM 8514 / BCRC 14874 / CCUG 350202 / NBRC 14942 / NCIMB 11054 / UW101) (Cytophaga johnsonae).